The sequence spans 213 residues: Putative 3-methyladenine DNA glycosylase (213 aa).

This sequence belongs to the DNA glycosylase MPG family.

This chain is Putative 3-methyladenine DNA glycosylase, found in Latilactobacillus sakei subsp. sakei (strain 23K) (Lactobacillus sakei subsp. sakei).